Reading from the N-terminus, the 674-residue chain is Multifunctional alkene reductase/demethylase OYE (674 aa).

Gly-62 and Gln-105 together coordinate FMN. The active-site Proton donor is the His-175. FMN contacts are provided by Arg-223 and Lys-299. Residues Cys-345, Cys-351, and Cys-358 each coordinate [4Fe-4S] cluster. Ala-391, Gln-418, and Arg-428 together coordinate FAD.

This sequence in the N-terminal section; belongs to the NADH:flavin oxidoreductase/NADH oxidase family. [4Fe-4S] cluster serves as cofactor. Requires FAD as cofactor. FMN is required as a cofactor.

The catalysed reaction is 3-phenylpropanoate + NAD(+) = (E)-cinnamate + NADH + H(+). It catalyses the reaction N-methyl-L-proline + NAD(+) + H2O = L-proline + formaldehyde + NADH + H(+). Functionally, a member of the 2-enoate reductase subfamily of old yellow enzymes (OYE) able to reduce alpha/beta alkenes near electron-withdrawing groups as well as perform oxidative demethylation chemistry. Prefers NADH over NADPH as cosubstrate. May play a role in osmotic stress response in situ. The polypeptide is Multifunctional alkene reductase/demethylase OYE (Caballeronia cordobensis (Burkholderia cordobensis)).